A 97-amino-acid chain; its full sequence is Large ribosomal subunit protein bL28 (97 aa).

The protein belongs to the bacterial ribosomal protein bL28 family.

The chain is Large ribosomal subunit protein bL28 from Bartonella quintana (strain Toulouse) (Rochalimaea quintana).